The primary structure comprises 404 residues: LL-diaminopimelate aminotransferase (404 aa).

Positions 15 and 42 each coordinate substrate. Pyridoxal 5'-phosphate is bound by residues Y72, 108–109 (AK), Y132, N188, Y219, and 247–249 (SFS). Positions 109, 132, and 188 each coordinate substrate. K250 carries the N6-(pyridoxal phosphate)lysine modification. Pyridoxal 5'-phosphate is bound by residues R258 and N288. Substrate contacts are provided by N288 and R384.

Belongs to the class-I pyridoxal-phosphate-dependent aminotransferase family. LL-diaminopimelate aminotransferase subfamily. Homodimer. Requires pyridoxal 5'-phosphate as cofactor.

The catalysed reaction is (2S,6S)-2,6-diaminopimelate + 2-oxoglutarate = (S)-2,3,4,5-tetrahydrodipicolinate + L-glutamate + H2O + H(+). The protein operates within amino-acid biosynthesis; L-lysine biosynthesis via DAP pathway; LL-2,6-diaminopimelate from (S)-tetrahydrodipicolinate (aminotransferase route): step 1/1. Involved in the synthesis of meso-diaminopimelate (m-DAP or DL-DAP), required for both lysine and peptidoglycan biosynthesis. Catalyzes the direct conversion of tetrahydrodipicolinate to LL-diaminopimelate. The polypeptide is LL-diaminopimelate aminotransferase (Lachnoclostridium phytofermentans (strain ATCC 700394 / DSM 18823 / ISDg) (Clostridium phytofermentans)).